Reading from the N-terminus, the 265-residue chain is tRNA pseudouridine synthase A (265 aa).

Asp58 functions as the Nucleophile in the catalytic mechanism. Tyr116 lines the substrate pocket.

It belongs to the tRNA pseudouridine synthase TruA family. Homodimer.

It catalyses the reaction uridine(38/39/40) in tRNA = pseudouridine(38/39/40) in tRNA. Functionally, formation of pseudouridine at positions 38, 39 and 40 in the anticodon stem and loop of transfer RNAs. The protein is tRNA pseudouridine synthase A of Neisseria meningitidis serogroup C / serotype 2a (strain ATCC 700532 / DSM 15464 / FAM18).